An 83-amino-acid chain; its full sequence is Delta-conotoxin-like Ac6.2 (83 aa).

The first 22 residues, 1 to 22 (MKLTCVVIVAVLFLTAWTFVTA), serve as a signal peptide directing secretion. Residues 23 to 51 (DDSRYGLKNLFPKARHEMKNPEASKLNKR) constitute a propeptide that is removed on maturation. 3 disulfides stabilise this stretch: C54-C69, C61-C73, and C68-C78. 4-hydroxyproline occurs at positions 57 and 65.

It belongs to the conotoxin O1 superfamily. As to expression, expressed by the venom duct.

It is found in the secreted. Functionally, delta-conotoxins bind to site 6 of voltage-gated sodium channels (Nav) and inhibit the inactivation process. The chain is Delta-conotoxin-like Ac6.2 from Conus achatinus (Little frog cone).